The chain runs to 276 residues: Rhamnulose-1-phosphate aldolase (276 aa).

Residue Glu-117 is part of the active site. Positions 141, 143, and 212 each coordinate Zn(2+).

It belongs to the aldolase class II family. RhaD subfamily. Homotetramer. Zn(2+) is required as a cofactor.

It localises to the cytoplasm. It catalyses the reaction L-rhamnulose 1-phosphate = (S)-lactaldehyde + dihydroxyacetone phosphate. The protein operates within carbohydrate degradation; L-rhamnose degradation; glycerone phosphate from L-rhamnose: step 3/3. In terms of biological role, catalyzes the reversible cleavage of L-rhamnulose-1-phosphate to dihydroxyacetone phosphate (DHAP) and L-lactaldehyde. In Klebsiella pneumoniae subsp. pneumoniae (strain ATCC 700721 / MGH 78578), this protein is Rhamnulose-1-phosphate aldolase.